The following is a 102-amino-acid chain: RNA-binding protein Hfq (102 aa).

In terms of domain architecture, Sm spans 9-68 (DPFLNALRRERVPVSIYLVNGIKLQGQIESFDQFVILLKNTVSQMVYKHAISTVVPSRPV). The interval 63 to 102 (VPSRPVSHHSNNAGGSTSSNYHHGSSAQNTSAQQDSEENE) is disordered. Over residues 70 to 96 (HHSNNAGGSTSSNYHHGSSAQNTSAQQ) the composition is skewed to polar residues.

This sequence belongs to the Hfq family. As to quaternary structure, homohexamer.

RNA chaperone that binds small regulatory RNA (sRNAs) and mRNAs to facilitate mRNA translational regulation in response to envelope stress, environmental stress and changes in metabolite concentrations. Also binds with high specificity to tRNAs. In Escherichia coli O17:K52:H18 (strain UMN026 / ExPEC), this protein is RNA-binding protein Hfq.